We begin with the raw amino-acid sequence, 524 residues long: Lysine--tRNA ligase (524 aa).

Mg(2+) is bound by residues E431 and E438.

Belongs to the class-II aminoacyl-tRNA synthetase family. As to quaternary structure, homodimer. Mg(2+) serves as cofactor.

The protein resides in the cytoplasm. It catalyses the reaction tRNA(Lys) + L-lysine + ATP = L-lysyl-tRNA(Lys) + AMP + diphosphate. The polypeptide is Lysine--tRNA ligase (lysS) (Chlamydia muridarum (strain MoPn / Nigg)).